A 362-amino-acid chain; its full sequence is Cobalt-precorrin-5B C(1)-methyltransferase (362 aa).

It belongs to the CbiD family.

It catalyses the reaction Co-precorrin-5B + S-adenosyl-L-methionine = Co-precorrin-6A + S-adenosyl-L-homocysteine. Its pathway is cofactor biosynthesis; adenosylcobalamin biosynthesis; cob(II)yrinate a,c-diamide from sirohydrochlorin (anaerobic route): step 6/10. Its function is as follows. Catalyzes the methylation of C-1 in cobalt-precorrin-5B to form cobalt-precorrin-6A. This is Cobalt-precorrin-5B C(1)-methyltransferase from Geobacter sulfurreducens (strain ATCC 51573 / DSM 12127 / PCA).